Here is a 747-residue protein sequence, read N- to C-terminus: Histone-lysine N-methyltransferase EZH1 (747 aa).

The disordered stretch occupies residues 188-231; the sequence is DEEEDGHNDPSDGKQDDSKEDLPVTRKRKRHAIEGNKKSSKKQF. The span at 194 to 211 shows a compositional bias: basic and acidic residues; sequence HNDPSDGKQDDSKEDLPV. K327 participates in a covalent cross-link: Glycyl lysine isopeptide (Lys-Gly) (interchain with G-Cter in SUMO2). Positions 368-414 are disordered; sequence VSASCSNASASAMAETKEGDSDRDTGNDWASSSSEANSRCQTPTKQK. The segment covering 369–381 has biased composition (low complexity); that stretch reads SASCSNASASAMA. The segment covering 382-393 has biased composition (basic and acidic residues); sequence ETKEGDSDRDTG. A compositionally biased stretch (polar residues) spans 395–414; it reads DWASSSSEANSRCQTPTKQK. The Nuclear localization signal signature appears at 491–496; the sequence is QKKKRK. The 103-residue stretch at 504–606 folds into the CXC domain; that stretch reads CRKIQLKKDN…CKVVSCKNCS (103 aa). Positions 613–728 constitute an SET domain; it reads KHLLLAPSDV…AGEELFFDYR (116 aa).

This sequence belongs to the class V-like SAM-binding methyltransferase superfamily. Histone-lysine methyltransferase family. EZ subfamily. In terms of assembly, component of the PRC2/EED-EZH1 complex, which includes EED, EZH1, SUZ12, RBBP4 and AEBP2. The PRC2/EED-EZH1 is less abundant than the PRC2/EED-EZH2 complex, has weak methyltransferase activity and compacts chromatin in the absence of the methyltransferase cofactor S-adenosyl-L-methionine (SAM). Interacts with EZHIP; the interaction blocks EZH1 methyltransferase activity. In terms of tissue distribution, expressed at high levels in kidney, adrenal gland, testis and brain.

The protein localises to the nucleus. The catalysed reaction is L-lysyl(27)-[histone H3] + 3 S-adenosyl-L-methionine = N(6),N(6),N(6)-trimethyl-L-lysyl(27)-[histone H3] + 3 S-adenosyl-L-homocysteine + 3 H(+). Functionally, polycomb group (PcG) protein. Catalytic subunit of the PRC2/EED-EZH1 complex, which methylates 'Lys-27' of histone H3, leading to transcriptional repression of the affected target gene. Able to mono-, di- and trimethylate 'Lys-27' of histone H3 to form H3K27me1, H3K27me2 and H3K27me3, respectively. Required for embryonic stem cell derivation and self-renewal, suggesting that it is involved in safeguarding embryonic stem cell identity. Compared to EZH2-containing complexes, it is less abundant in embryonic stem cells, has weak methyltransferase activity and plays a less critical role in forming H3K27me3, which is required for embryonic stem cell identity and proper differentiation. This is Histone-lysine N-methyltransferase EZH1 (Ezh1) from Mus musculus (Mouse).